Reading from the N-terminus, the 212-residue chain is Glycerol-3-phosphate acyltransferase (212 aa).

5 helical membrane passes run 3–23 (IIIM…LWIG), 70–90 (IPII…FAII), 110–130 (AGVL…IFLL), 143–163 (ITVA…GFIL), and 164–184 (TDYD…IIIR).

It belongs to the PlsY family. As to quaternary structure, probably interacts with PlsX.

The protein localises to the cell membrane. It carries out the reaction an acyl phosphate + sn-glycerol 3-phosphate = a 1-acyl-sn-glycero-3-phosphate + phosphate. The protein operates within lipid metabolism; phospholipid metabolism. Catalyzes the transfer of an acyl group from acyl-phosphate (acyl-PO(4)) to glycerol-3-phosphate (G3P) to form lysophosphatidic acid (LPA). This enzyme utilizes acyl-phosphate as fatty acyl donor, but not acyl-CoA or acyl-ACP. This chain is Glycerol-3-phosphate acyltransferase, found in Streptococcus agalactiae serotype III (strain NEM316).